A 701-amino-acid polypeptide reads, in one-letter code: Protein UL29/UL28 (701 aa).

A disordered region spans residues 1-33 (MSGRRKGCSAATASSSSSSPPSRLPPLPGHARR).

Belongs to the herpesviridae US22 family. As to quaternary structure, interacts with UL38 and host HDAC1; these interactions are necessary for the HDAC1 interaction with UL38. Interacts with host MTA2.

Its subcellular location is the virion. It localises to the host nucleus. The protein resides in the host cytoplasm. Functionally, contributes to activation of immediate-early gene expression. The sequence is that of Protein UL29/UL28 (UL29) from Homo sapiens (Human).